Here is a 332-residue protein sequence, read N- to C-terminus: L-lactate dehydrogenase A chain (332 aa).

NAD(+) is bound by residues 29–57 (GAVG…VEDK) and arginine 99. The substrate site is built by arginine 106, asparagine 138, and arginine 169. Asparagine 138 provides a ligand contact to NAD(+). Histidine 193 (proton acceptor) is an active-site residue. Threonine 248 provides a ligand contact to substrate.

It belongs to the LDH/MDH superfamily. LDH family. In terms of assembly, homotetramer.

It is found in the cytoplasm. It carries out the reaction (S)-lactate + NAD(+) = pyruvate + NADH + H(+). The protein operates within fermentation; pyruvate fermentation to lactate; (S)-lactate from pyruvate: step 1/1. Interconverts simultaneously and stereospecifically pyruvate and lactate with concomitant interconversion of NADH and NAD(+). In Columba livia (Rock dove), this protein is L-lactate dehydrogenase A chain (LDHA).